The primary structure comprises 263 residues: Acidic leucine-rich nuclear phosphoprotein 32 family member A (263 aa).

LRR repeat units lie at residues 16–37 (QIQELNLDNCRSTSIVGLTDEY), 39–60 (ALESLSLINVGLTTLKGFPKLP), 61–83 (NLKKLELSDNRISSGLNYLTTSP), and 84–105 (KLQYLNLSGNKIKDLETLKPLE). An LRRCT domain is found at 118 to 156 (NDATQVDNYREKIFKMLPSLNFLDGFDCNDEEAQSEGDD). Composition is skewed to acidic residues over residues 144 to 189 (DCND…DGDN) and 198 to 232 (YNDDLEEDNSDWEEGEGGGDDDEEDSDIDDADGEA). The interval 144 to 263 (DCNDEEAQSE…ARGKKRKHDG (120 aa)) is disordered. Over residues 242–254 (SKKEPEKTDESQA) the composition is skewed to basic and acidic residues.

It belongs to the ANP32 family. Post-translationally, phosphorylated on serine residues.

The protein localises to the nucleus. It is found in the cytoplasm. Implicated in a number of cellular processes, including proliferation, differentiation, caspase-dependent and caspase-independent apoptosis, suppression of transformation (tumor suppressor), inhibition of protein phosphatase 2A, regulation of mRNA trafficking and stability, and inhibition of acetyltransferases as part of the INHAT (inhibitor of histone acetyltransferases) complex. The chain is Acidic leucine-rich nuclear phosphoprotein 32 family member A (Anp32a) from Drosophila pseudoobscura pseudoobscura (Fruit fly).